Reading from the N-terminus, the 340-residue chain is Aurora kinase A- and ninein-interacting protein (340 aa).

The interaction with AURKA stretch occupies residues 175 to 340 (QREAKRKGEG…DSEGNRVIRH (166 aa)). The span at 178–190 (AKRKGEGLRESKT) shows a compositional bias: basic and acidic residues. The tract at residues 178 to 209 (AKRKGEGLRESKTDCPGMGSHIRPPGSKCHQP) is disordered. The interaction with RBBP8/CtIP stretch occupies residues 266-340 (RDSWSQLFTE…DSEGNRVIRH (75 aa)). A Phosphoserine modification is found at serine 277. The interval 293 to 317 (DVTNARNQGSGQFPDSPQAQGQDGP) is disordered. Polar residues predominate over residues 296–313 (NARNQGSGQFPDSPQAQG).

Belongs to the AUNIP family. Interacts (via C-terminus) with AURKA (via C-terminus). Interacts (via N-terminus) with NIN; this interaction blocks NIN phosphorylation by both AURKA and GSK3B. Identified in a complex with NIN and AURKA. Interacts with RBBP8/CtIP.

The protein resides in the nucleus. The protein localises to the chromosome. It localises to the cytoplasm. It is found in the cytoskeleton. Its subcellular location is the microtubule organizing center. The protein resides in the centrosome. The protein localises to the spindle pole. In terms of biological role, DNA-binding protein that accumulates at DNA double-strand breaks (DSBs) following DNA damage and promotes DNA resection and homologous recombination. Serves as a sensor of DNA damage: binds DNA with a strong preference for DNA substrates that mimic structures generated at stalled replication forks, and anchors RBBP8/CtIP to DSB sites to promote DNA end resection and ensuing homologous recombination repair. Inhibits non-homologous end joining (NHEJ). Required for the dynamic movement of AURKA at the centrosomes and spindle apparatus during the cell cycle. In Mus musculus (Mouse), this protein is Aurora kinase A- and ninein-interacting protein.